A 317-amino-acid polypeptide reads, in one-letter code: Ricin B-like lectin EULS3 (317 aa).

Basic residues predominate over residues 1–11 (MEHHHQHHRHH). The tract at residues 1-157 (MEHHHQHHRH…YHKPDENRLP (157 aa)) is disordered. Over residues 25-36 (VPPPHVDAPPQP) the composition is skewed to pro residues. Residues 136 to 146 (HSSNQPQSSSG) are compositionally biased toward polar residues. Positions 168–315 (TVKVYSKAEP…KGDNQLWKIF (148 aa)) constitute a Ricin B-type lectin domain.

Interacts (via N-terminus) with ATS3A and ATS3B. As to expression, expressed in roots, rosette leaves, stems, cauline leaves and flowers.

It localises to the nucleus. Its subcellular location is the cytoplasm. Functionally, lectin which binds carbohydrates in vitro. Interacts through its lectin domain with glycan structures containing one or more Lewis X, Lewis Y or lactosamine motifs. May play a role in abiotic stress responses. May play a role in abscisic acid-induced stomatal closure. May play a role in disease resistance against Pseudomonas syringae through its involvement in stomatal movement. The polypeptide is Ricin B-like lectin EULS3 (Arabidopsis thaliana (Mouse-ear cress)).